The chain runs to 689 residues: Methionine--tRNA ligase (689 aa).

Residues 15–25 carry the 'HIGH' region motif; that stretch reads PYANGPIHLGH. 4 residues coordinate Zn(2+): Cys-146, Cys-149, Cys-159, and Cys-162. The 'KMSKS' region signature appears at 332–336; that stretch reads KMSKS. Lys-335 lines the ATP pocket. A tRNA-binding domain is found at 588–689; the sequence is DFAKIDLRIA…EGAQPGMRVK (102 aa).

This sequence belongs to the class-I aminoacyl-tRNA synthetase family. MetG type 1 subfamily. As to quaternary structure, homodimer. Zn(2+) serves as cofactor.

Its subcellular location is the cytoplasm. The catalysed reaction is tRNA(Met) + L-methionine + ATP = L-methionyl-tRNA(Met) + AMP + diphosphate. Functionally, is required not only for elongation of protein synthesis but also for the initiation of all mRNA translation through initiator tRNA(fMet) aminoacylation. The chain is Methionine--tRNA ligase from Shewanella baltica (strain OS223).